Here is a 501-residue protein sequence, read N- to C-terminus: Probable cytosol aminopeptidase (501 aa).

The Mn(2+) site is built by Lys268 and Asp273. Lys280 is an active-site residue. Mn(2+) is bound by residues Asp291, Asp350, and Glu352. The active site involves Arg354.

Belongs to the peptidase M17 family. The cofactor is Mn(2+).

It localises to the cytoplasm. It catalyses the reaction Release of an N-terminal amino acid, Xaa-|-Yaa-, in which Xaa is preferably Leu, but may be other amino acids including Pro although not Arg or Lys, and Yaa may be Pro. Amino acid amides and methyl esters are also readily hydrolyzed, but rates on arylamides are exceedingly low.. It carries out the reaction Release of an N-terminal amino acid, preferentially leucine, but not glutamic or aspartic acids.. Its function is as follows. Presumably involved in the processing and regular turnover of intracellular proteins. Catalyzes the removal of unsubstituted N-terminal amino acids from various peptides. The sequence is that of Probable cytosol aminopeptidase from Nitrosococcus oceani (strain ATCC 19707 / BCRC 17464 / JCM 30415 / NCIMB 11848 / C-107).